The chain runs to 383 residues: uncharacterized protein (383 aa).

Residues 6–26 (LFLFSCLYFIGGNLKALVLGI) form a helical membrane-spanning segment. One can recognise an ATP-grasp domain in the interval 131-303 (YKKLKNLGFN…LAMVLLNNKY (173 aa)).

Its subcellular location is the membrane. This is an uncharacterized protein from Methanocaldococcus jannaschii (strain ATCC 43067 / DSM 2661 / JAL-1 / JCM 10045 / NBRC 100440) (Methanococcus jannaschii).